Reading from the N-terminus, the 514-residue chain is Peptide chain release factor 3 (514 aa).

The tr-type G domain occupies 8-268 (KKRRTFAIIS…IFLKFAPEPH (261 aa)). GTP contacts are provided by residues 17–24 (SHPDAGKT), 85–89 (DTPGH), and 139–142 (NKLD).

This sequence belongs to the TRAFAC class translation factor GTPase superfamily. Classic translation factor GTPase family. PrfC subfamily.

It is found in the cytoplasm. Its function is as follows. Increases the formation of ribosomal termination complexes and stimulates activities of RF-1 and RF-2. It binds guanine nucleotides and has strong preference for UGA stop codons. It may interact directly with the ribosome. The stimulation of RF-1 and RF-2 is significantly reduced by GTP and GDP, but not by GMP. The protein is Peptide chain release factor 3 of Streptococcus pneumoniae serotype 2 (strain D39 / NCTC 7466).